The sequence spans 264 residues: S-adenosylmethionine decarboxylase proenzyme (264 aa).

The active-site Schiff-base intermediate with substrate; via pyruvic acid is Ser112. Ser112 is modified (pyruvic acid (Ser); by autocatalysis). Catalysis depends on His117, which acts as the Proton acceptor; for processing activity. Cys140 functions as the Proton donor; for catalytic activity in the catalytic mechanism.

This sequence belongs to the prokaryotic AdoMetDC family. Type 2 subfamily. Heterooctamer of four alpha and four beta chains arranged as a tetramer of alpha/beta heterodimers. Pyruvate is required as a cofactor. Is synthesized initially as an inactive proenzyme. Formation of the active enzyme involves a self-maturation process in which the active site pyruvoyl group is generated from an internal serine residue via an autocatalytic post-translational modification. Two non-identical subunits are generated from the proenzyme in this reaction, and the pyruvate is formed at the N-terminus of the alpha chain, which is derived from the carboxyl end of the proenzyme. The post-translation cleavage follows an unusual pathway, termed non-hydrolytic serinolysis, in which the side chain hydroxyl group of the serine supplies its oxygen atom to form the C-terminus of the beta chain, while the remainder of the serine residue undergoes an oxidative deamination to produce ammonia and the pyruvoyl group blocking the N-terminus of the alpha chain.

The enzyme catalyses S-adenosyl-L-methionine + H(+) = S-adenosyl 3-(methylsulfanyl)propylamine + CO2. It participates in amine and polyamine biosynthesis; S-adenosylmethioninamine biosynthesis; S-adenosylmethioninamine from S-adenosyl-L-methionine: step 1/1. Catalyzes the decarboxylation of S-adenosylmethionine to S-adenosylmethioninamine (dcAdoMet), the propylamine donor required for the synthesis of the polyamines spermine and spermidine from the diamine putrescine. This is S-adenosylmethionine decarboxylase proenzyme from Escherichia coli O45:K1 (strain S88 / ExPEC).